A 330-amino-acid chain; its full sequence is Peptide transport system ATP-binding protein SapD (330 aa).

Positions 6–259 (IRNLTIEFKT…PHHPYTQALI (254 aa)) constitute an ABC transporter domain. 40–47 (GESGSGKS) contributes to the ATP binding site.

Belongs to the ABC transporter superfamily.

Its subcellular location is the cell inner membrane. Its function is as follows. Involved in a peptide intake transport system that plays a role in the resistance to antimicrobial peptides. The chain is Peptide transport system ATP-binding protein SapD from Salmonella typhimurium (strain LT2 / SGSC1412 / ATCC 700720).